Consider the following 491-residue polypeptide: Cobyric acid synthase (491 aa).

The GATase cobBQ-type domain maps to D250 to W441. The active-site Nucleophile is the C331. H433 is an active-site residue.

This sequence belongs to the CobB/CobQ family. CobQ subfamily.

The protein operates within cofactor biosynthesis; adenosylcobalamin biosynthesis. Its function is as follows. Catalyzes amidations at positions B, D, E, and G on adenosylcobyrinic A,C-diamide. NH(2) groups are provided by glutamine, and one molecule of ATP is hydrogenolyzed for each amidation. The chain is Cobyric acid synthase from Trichormus variabilis (strain ATCC 29413 / PCC 7937) (Anabaena variabilis).